Here is a 519-residue protein sequence, read N- to C-terminus: Iroquois-class homeodomain protein IRX-4 (519 aa).

A DNA-binding region (homeobox; TALE-type) is located at residues 143–204; it reads GTRRKNATRE…NARRRLKKEN (62 aa). The tract at residues 204-298 is disordered; sequence NKMTWPPRNK…VPAAPDGPVK (95 aa). The segment covering 213–222 has biased composition (basic and acidic residues); the sequence is KCADEKRPYA. Composition is skewed to acidic residues over residues 223–235 and 257–267; these read EGEE…EEAR and LSDLDDFDPLE.

This sequence belongs to the TALE/IRO homeobox family. As to quaternary structure, interacts with the vitamin D receptor VDR but doesn't affect its transactivation activity. In terms of tissue distribution, predominantly expressed in cardiac ventricles.

Its subcellular location is the nucleus. Its function is as follows. Likely to be an important mediator of ventricular differentiation during cardiac development. The chain is Iroquois-class homeodomain protein IRX-4 (IRX4) from Homo sapiens (Human).